The primary structure comprises 282 residues: NADPH-dependent 7-cyano-7-deazaguanine reductase (282 aa).

Position 88 to 90 (88 to 90) interacts with substrate; sequence IES. Residue 90–91 participates in NADPH binding; sequence SK. Cys-190 serves as the catalytic Thioimide intermediate. The active-site Proton donor is the Asp-197. Position 229 to 230 (229 to 230) interacts with substrate; the sequence is HE. 258–259 is a binding site for NADPH; sequence RG.

Belongs to the GTP cyclohydrolase I family. QueF type 2 subfamily. Homodimer.

It is found in the cytoplasm. It catalyses the reaction 7-aminomethyl-7-carbaguanine + 2 NADP(+) = 7-cyano-7-deazaguanine + 2 NADPH + 3 H(+). It participates in tRNA modification; tRNA-queuosine biosynthesis. In terms of biological role, catalyzes the NADPH-dependent reduction of 7-cyano-7-deazaguanine (preQ0) to 7-aminomethyl-7-deazaguanine (preQ1). The sequence is that of NADPH-dependent 7-cyano-7-deazaguanine reductase from Escherichia coli (strain UTI89 / UPEC).